The chain runs to 176 residues: GTP-dependent dephospho-CoA kinase (176 aa).

D47, V48, D66, and E125 together coordinate GTP.

Belongs to the GTP-dependent DPCK family.

The catalysed reaction is 3'-dephospho-CoA + GTP = GDP + CoA + H(+). It functions in the pathway cofactor biosynthesis; coenzyme A biosynthesis. Functionally, catalyzes the GTP-dependent phosphorylation of the 3'-hydroxyl group of dephosphocoenzyme A to form coenzyme A (CoA). The protein is GTP-dependent dephospho-CoA kinase of Methanocella arvoryzae (strain DSM 22066 / NBRC 105507 / MRE50).